The chain runs to 523 residues: 2-isopropylmalate synthase (523 aa).

Residues 5-267 enclose the Pyruvate carboxyltransferase domain; sequence VIIFDTTLRD…HTNINHHEIW (263 aa). 4 residues coordinate Mn(2+): D14, H202, H204, and N238. The segment at 392–523 is regulatory domain; it reads RLDYFNVQSG…QNKENNKETV (132 aa).

This sequence belongs to the alpha-IPM synthase/homocitrate synthase family. LeuA type 1 subfamily. As to quaternary structure, homodimer. Mn(2+) is required as a cofactor.

Its subcellular location is the cytoplasm. It catalyses the reaction 3-methyl-2-oxobutanoate + acetyl-CoA + H2O = (2S)-2-isopropylmalate + CoA + H(+). It participates in amino-acid biosynthesis; L-leucine biosynthesis; L-leucine from 3-methyl-2-oxobutanoate: step 1/4. Its function is as follows. Catalyzes the condensation of the acetyl group of acetyl-CoA with 3-methyl-2-oxobutanoate (2-ketoisovalerate) to form 3-carboxy-3-hydroxy-4-methylpentanoate (2-isopropylmalate). The sequence is that of 2-isopropylmalate synthase from Klebsiella pneumoniae subsp. pneumoniae (strain ATCC 700721 / MGH 78578).